Consider the following 1248-residue polypeptide: von Willebrand factor A domain-containing protein 5B2 (1248 aa).

The 138-residue stretch at 1–138 (MPGLYCPTSW…TMTVTLCSSR (138 aa)) folds into the VIT domain. The disordered stretch occupies residues 184–204 (VGSPEEERPTWEQPTATPDVF). Residues 354–527 (ELLFLLDGSG…KALEPALSDI (174 aa)) form the VWFA domain. Disordered stretches follow at residues 590–650 (PEEV…SSDT), 672–710 (SASPEPGPGSTCSSESPGSQGPGSPSGSRPLDPPSQQGC), 751–789 (ALAGRSLSSPSGRANPVPGRARHPSLDAIPDGLGPEPGQ), 1008–1037 (SKSALGEPISPTGDHHGLPHQPPASSRLSL), and 1126–1168 (DSAT…SSDL). Residues 595–619 (SATSPGTEPTHTTEPLGTGTVSAEL) are compositionally biased toward polar residues. Low complexity-rich tracts occupy residues 684-701 (SSESPGSQGPGSPSGSRP), 751-764 (ALAGRSLSSPSGRA), and 780-789 (PDGLGPEPGQ). A compositionally biased stretch (low complexity) spans 1127-1145 (SATASCSQSPSSGSEGPGQ). Basic and acidic residues predominate over residues 1159 to 1168 (GMERQDSSDL).

The protein is von Willebrand factor A domain-containing protein 5B2 (Vwa5b2) of Mus musculus (Mouse).